Consider the following 133-residue polypeptide: Meiotically up-regulated gene 15 protein (133 aa).

It is found in the cytoplasm. Its subcellular location is the nucleus. Functionally, has a role in meiosis. This chain is Meiotically up-regulated gene 15 protein (mug15), found in Schizosaccharomyces pombe (strain 972 / ATCC 24843) (Fission yeast).